The sequence spans 227 residues: 2-C-methyl-D-erythritol 4-phosphate cytidylyltransferase (227 aa).

Belongs to the IspD/TarI cytidylyltransferase family. IspD subfamily.

The enzyme catalyses 2-C-methyl-D-erythritol 4-phosphate + CTP + H(+) = 4-CDP-2-C-methyl-D-erythritol + diphosphate. It functions in the pathway isoprenoid biosynthesis; isopentenyl diphosphate biosynthesis via DXP pathway; isopentenyl diphosphate from 1-deoxy-D-xylulose 5-phosphate: step 2/6. Functionally, catalyzes the formation of 4-diphosphocytidyl-2-C-methyl-D-erythritol from CTP and 2-C-methyl-D-erythritol 4-phosphate (MEP). This chain is 2-C-methyl-D-erythritol 4-phosphate cytidylyltransferase, found in Thermosipho melanesiensis (strain DSM 12029 / CIP 104789 / BI429).